The chain runs to 95 residues: Small ribosomal subunit protein bS18 (95 aa).

It belongs to the bacterial ribosomal protein bS18 family. Part of the 30S ribosomal subunit. Forms a tight heterodimer with protein bS6.

Its function is as follows. Binds as a heterodimer with protein bS6 to the central domain of the 16S rRNA, where it helps stabilize the platform of the 30S subunit. The polypeptide is Small ribosomal subunit protein bS18 (Acidiphilium cryptum (strain JF-5)).